The following is a 978-amino-acid chain: Monofunctional C1-tetrahydrofolate synthase, mitochondrial (978 aa).

Low complexity predominate over residues 1–10; the sequence is MGTRLPLVLR. A mitochondrion-targeting transit peptide spans 1–31; it reads MGTRLPLVLRQLRRPPQPPGPPRRLRVPCRA. The interval 1–71 is disordered; it reads MGTRLPLVLR…SPGGRTPAAR (71 aa). Residues 31-348 form a methylenetetrahydrofolate dehydrogenase and cyclohydrolase region; sequence ASSGGGGGGG…REQQHRRWRL (318 aa). Gly residues predominate over residues 33-45; sequence SGGGGGGGGGREG. At lysine 189 the chain carries N6-acetyllysine; alternate. Lysine 189 carries the N6-succinyllysine; alternate modification. A formyltetrahydrofolate synthetase region spans residues 349 to 978; that stretch reads HCLKLQPLSP…TETEQVKGLF (630 aa). Serine 357 carries the phosphoserine modification. 423-430 serves as a coordination point for ATP; that stretch reads TPLGEGKS. Position 596 is an N6-succinyllysine (lysine 596).

It in the N-terminal section; belongs to the tetrahydrofolate dehydrogenase/cyclohydrolase family. In the C-terminal section; belongs to the formate--tetrahydrofolate ligase family. In terms of assembly, homodimer. In terms of tissue distribution, detected in most tissues, highest expression found in placenta, thymus and brain. Low expression is found in liver and skeletal muscle. Up-regulated in colon adenocarcinoma.

The protein resides in the mitochondrion. It carries out the reaction (6S)-5,6,7,8-tetrahydrofolate + formate + ATP = (6R)-10-formyltetrahydrofolate + ADP + phosphate. The protein operates within one-carbon metabolism; tetrahydrofolate interconversion. Its function is as follows. May provide the missing metabolic reaction required to link the mitochondria and the cytoplasm in the mammalian model of one-carbon folate metabolism complementing thus the enzymatic activities of MTHFD2. This Homo sapiens (Human) protein is Monofunctional C1-tetrahydrofolate synthase, mitochondrial.